A 734-amino-acid chain; its full sequence is Methionine--tRNA ligase (734 aa).

The 'HIGH' region motif lies at 12–22; it reads PYVNNIPHLGN. Zn(2+) contacts are provided by cysteine 143, cysteine 146, cysteine 155, and cysteine 158. Positions 330–334 match the 'KMSKS' region motif; it reads KFSKS. Lysine 333 serves as a coordination point for ATP. The tRNA-binding domain occupies 570-675; the sequence is FREKVLLRVV…QNPIAGERII (106 aa).

Belongs to the class-I aminoacyl-tRNA synthetase family. MetG type 1 subfamily. In terms of assembly, homodimer. Zn(2+) is required as a cofactor.

It is found in the cytoplasm. It carries out the reaction tRNA(Met) + L-methionine + ATP = L-methionyl-tRNA(Met) + AMP + diphosphate. In terms of biological role, is required not only for elongation of protein synthesis but also for the initiation of all mRNA translation through initiator tRNA(fMet) aminoacylation. This chain is Methionine--tRNA ligase, found in Borreliella burgdorferi (strain ZS7) (Borrelia burgdorferi).